Consider the following 316-residue polypeptide: Ribosomal RNA small subunit methyltransferase H (316 aa).

S-adenosyl-L-methionine is bound by residues Ser35–His37, Asp55, Phe84, Asp105, and Gln112.

This sequence belongs to the methyltransferase superfamily. RsmH family.

The protein localises to the cytoplasm. The catalysed reaction is cytidine(1402) in 16S rRNA + S-adenosyl-L-methionine = N(4)-methylcytidine(1402) in 16S rRNA + S-adenosyl-L-homocysteine + H(+). Specifically methylates the N4 position of cytidine in position 1402 (C1402) of 16S rRNA. In Streptococcus equi subsp. zooepidemicus (strain H70), this protein is Ribosomal RNA small subunit methyltransferase H.